Consider the following 325-residue polypeptide: Peroxidase 68 (325 aa).

The N-terminal stretch at 1 to 28 (MECYEQSRQRAAFVVLLFIVMLGSQAQA) is a signal peptide. Gln29 carries the pyrrolidone carboxylic acid modification. 4 cysteine pairs are disulfide-bonded: Cys39-Cys119, Cys72-Cys77, Cys125-Cys321, and Cys205-Cys230. The active-site Proton acceptor is the His70. Positions 71, 74, 76, 78, and 80 each coordinate Ca(2+). The N-linked (GlcNAc...) asparagine glycan is linked to Asn99. Pro168 contacts substrate. His198 serves as a coordination point for heme b. Position 199 (Thr199) interacts with Ca(2+). Asn214 carries N-linked (GlcNAc...) asparagine glycosylation. 3 residues coordinate Ca(2+): Asp245, Thr248, and Asp253.

The protein belongs to the peroxidase family. Classical plant (class III) peroxidase subfamily. Heme b is required as a cofactor. Ca(2+) serves as cofactor.

It localises to the secreted. The catalysed reaction is 2 a phenolic donor + H2O2 = 2 a phenolic radical donor + 2 H2O. Its function is as follows. Removal of H(2)O(2), oxidation of toxic reductants, biosynthesis and degradation of lignin, suberization, auxin catabolism, response to environmental stresses such as wounding, pathogen attack and oxidative stress. These functions might be dependent on each isozyme/isoform in each plant tissue. This is Peroxidase 68 (PER68) from Arabidopsis thaliana (Mouse-ear cress).